The primary structure comprises 403 residues: Acetylornithine aminotransferase (403 aa).

Pyridoxal 5'-phosphate contacts are provided by residues 101–102 (GA) and phenylalanine 134. A N(2)-acetyl-L-ornithine-binding site is contributed by arginine 137. 219–222 (DEVQ) is a pyridoxal 5'-phosphate binding site. An N6-(pyridoxal phosphate)lysine modification is found at lysine 248. Threonine 276 is a binding site for N(2)-acetyl-L-ornithine. Residue threonine 277 coordinates pyridoxal 5'-phosphate.

It belongs to the class-III pyridoxal-phosphate-dependent aminotransferase family. ArgD subfamily. In terms of assembly, homodimer. It depends on pyridoxal 5'-phosphate as a cofactor.

The protein resides in the cytoplasm. It carries out the reaction N(2)-acetyl-L-ornithine + 2-oxoglutarate = N-acetyl-L-glutamate 5-semialdehyde + L-glutamate. The protein operates within amino-acid biosynthesis; L-arginine biosynthesis; N(2)-acetyl-L-ornithine from L-glutamate: step 4/4. This is Acetylornithine aminotransferase from Brucella melitensis biotype 1 (strain ATCC 23456 / CCUG 17765 / NCTC 10094 / 16M).